The chain runs to 694 residues: Cyclic nucleotide-gated channel beta-3 (694 aa).

Over 1 to 210 the chain is Cytoplasmic; sequence MLKSLTVKFN…SIDSYTDRVY (210 aa). Disordered regions lie at residues 24–82 and 146–177; these read CPNL…DPEC and ENFPEVEASSQTAMSTNISPKQENNSKLKEHQ. 2 stretches are compositionally biased toward polar residues: residues 26–40 and 153–168; these read NLSSLSQPTIAQGDN and ASSQTAMSTNISPKQE. A helical membrane pass occupies residues 211 to 234; sequence LLWLLLVTIAYNWNCWLLPVRLVF. Residues 235–241 lie on the Extracellular side of the membrane; the sequence is PCQTPDN. The chain crosses the membrane as a helical span at residues 242 to 262; sequence KNYWIITDIVCDIIYLCDILL. Topologically, residues 263 to 291 are cytoplasmic; it reads IQPRLQFVRGGEIIVDSNELKRNYRSSTK. A helical transmembrane segment spans residues 292–309; sequence FRMDVASLLPFEVLYIFF. Residues 310 to 312 lie on the Extracellular side of the membrane; it reads GVN. A helical transmembrane segment spans residues 313–327; the sequence is PIFRANRILKYTSFF. The Cytoplasmic segment spans residues 328 to 340; that stretch reads EFNHHLESIMDKA. The ion conduction pathway stretch occupies residues 340-439; it reads AYVYRVIRTT…IGQMRDVIGA (100 aa). Residues 341–363 form a helical membrane-spanning segment; sequence YVYRVIRTTGYLLFLLHINACVY. The Extracellular portion of the chain corresponds to 364–385; it reads YWASDYEGIGSTKWVYNGEGNK. The next 2 helical transmembrane spans lie at 386–412 and 413–437; these read YLRCFYWAVRTLITIGGLPEPQTSFEI and VFQFLNFFSGVFVFSSLIGQMRDVI. A selectivity filter region spans residues 399–402; it reads TIGG. The Cytoplasmic segment spans residues 438–694; that stretch reads GAATANQNYF…KGKRKTTTQK (257 aa). Residues 442–518 form a C-linker region; that stretch reads ANQNYFQACM…SIIDKVELFK (77 aa). Positions 522–638 are cyclic nucleotide-binding domain; sequence TQMIYDLLLR…LLMKKAKILL (117 aa). 4 residues coordinate 3',5'-cyclic GMP: G583, E584, R596, and T597.

This sequence belongs to the cyclic nucleotide-gated cation channel (TC 1.A.1.5) family. CNGB3 subfamily. Forms heterotetrameric channels composed of CNGA3 and CNGB3 subunits with 3:1 stoichiometry. Small subset of retinal photoreceptor cells and testis.

It localises to the cell membrane. It carries out the reaction Ca(2+)(in) = Ca(2+)(out). It catalyses the reaction Na(+)(in) = Na(+)(out). The enzyme catalyses K(+)(in) = K(+)(out). The catalysed reaction is NH4(+)(in) = NH4(+)(out). It carries out the reaction Rb(+)(in) = Rb(+)(out). It catalyses the reaction Li(+)(in) = Li(+)(out). The enzyme catalyses Cs(+)(in) = Cs(+)(out). In terms of biological role, pore-forming subunit of the cone cyclic nucleotide-gated channel. Mediates cone photoresponses at bright light converting transient changes in intracellular cGMP levels into electrical signals. In the dark, cGMP levels are high and keep the channel open enabling a steady inward current carried by Na(+) and Ca(2+) ions that leads to membrane depolarization and neurotransmitter release from synaptic terminals. Upon photon absorption cGMP levels decline leading to channel closure and membrane hyperpolarization that ultimately slows neurotransmitter release and signals the presence of light, the end point of the phototransduction cascade. Conducts cGMP- and cAMP-gated ion currents, with permeability for monovalent and divalent cations. The protein is Cyclic nucleotide-gated channel beta-3 of Mus musculus (Mouse).